Reading from the N-terminus, the 659-residue chain is 3-hydroxypropionyl-coenzyme A synthetase (659 aa).

Residue Asp525 is part of the active site. At Lys616 the chain carries N6-acetyllysine.

Belongs to the ATP-dependent AMP-binding enzyme family.

The enzyme catalyses 3-hydroxypropanoate + ATP + CoA = 3-hydroxypropanoyl-CoA + AMP + diphosphate. Plays a role in the autotrophic CO(2) fixation pathway. Activates 3-hydroxypropionate to its CoA ester. Can also activate propionate, and to a lesser extent acrylate, acetate and butyrate. The protein is 3-hydroxypropionyl-coenzyme A synthetase of Sulfurisphaera tokodaii (strain DSM 16993 / JCM 10545 / NBRC 100140 / 7) (Sulfolobus tokodaii).